A 651-amino-acid polypeptide reads, in one-letter code: Beta-glucuronidase (651 aa).

An N-terminal signal peptide occupies residues 1–22 (MARGSAVAWAAFGPLLWGCALG). Residues asparagine 173, asparagine 190, asparagine 272, and asparagine 420 are each glycosylated (N-linked (GlcNAc...) asparagine). Glutamate 451 serves as the catalytic Proton donor. Residue asparagine 631 is glycosylated (N-linked (GlcNAc...) asparagine).

The protein belongs to the glycosyl hydrolase 2 family. Homotetramer.

Its subcellular location is the lysosome. The catalysed reaction is a beta-D-glucuronoside + H2O = D-glucuronate + an alcohol. Inhibited by L-aspartic acid. Functionally, plays an important role in the degradation of dermatan and keratan sulfates. The protein is Beta-glucuronidase (GUSB) of Pongo abelii (Sumatran orangutan).